The chain runs to 278 residues: Large ribosomal subunit protein uL2 (278 aa).

Disordered stretches follow at residues 1-58 (MAIR…GGGH) and 225-278 (VMNP…KNKR). Residues 37 to 58 (LHGRGGRNAHGRITTRHKGGGH) are compositionally biased toward basic residues. The span at 253-267 (PEGRTRKNKASDKLI) shows a compositional bias: basic and acidic residues. Basic residues predominate over residues 268–278 (VRRRRTGKNKR).

The protein belongs to the universal ribosomal protein uL2 family. As to quaternary structure, part of the 50S ribosomal subunit. Forms a bridge to the 30S subunit in the 70S ribosome.

Its function is as follows. One of the primary rRNA binding proteins. Required for association of the 30S and 50S subunits to form the 70S ribosome, for tRNA binding and peptide bond formation. It has been suggested to have peptidyltransferase activity; this is somewhat controversial. Makes several contacts with the 16S rRNA in the 70S ribosome. This chain is Large ribosomal subunit protein uL2, found in Rhodococcus opacus (strain B4).